The chain runs to 383 residues: Bifunctional enzyme IspD/IspF (383 aa).

Residues 1–226 (MKIAAVIVAA…ERQIMSETIT (226 aa)) are 2-C-methyl-D-erythritol 4-phosphate cytidylyltransferase. Residues 227–383 (VTGQGYDVHR…QAIVTARLTT (157 aa)) are 2-C-methyl-D-erythritol 2,4-cyclodiphosphate synthase. 2 residues coordinate a divalent metal cation: D233 and H235. Residues 233 to 235 (DVH) and 259 to 260 (HS) each bind 4-CDP-2-C-methyl-D-erythritol 2-phosphate. Residue H267 participates in a divalent metal cation binding. 4-CDP-2-C-methyl-D-erythritol 2-phosphate is bound by residues 281 to 283 (DIG), 357 to 360 (TTTE), F364, and R367.

It in the N-terminal section; belongs to the IspD/TarI cytidylyltransferase family. IspD subfamily. This sequence in the C-terminal section; belongs to the IspF family. A divalent metal cation serves as cofactor.

The enzyme catalyses 2-C-methyl-D-erythritol 4-phosphate + CTP + H(+) = 4-CDP-2-C-methyl-D-erythritol + diphosphate. It catalyses the reaction 4-CDP-2-C-methyl-D-erythritol 2-phosphate = 2-C-methyl-D-erythritol 2,4-cyclic diphosphate + CMP. The protein operates within isoprenoid biosynthesis; isopentenyl diphosphate biosynthesis via DXP pathway; isopentenyl diphosphate from 1-deoxy-D-xylulose 5-phosphate: step 2/6. It functions in the pathway isoprenoid biosynthesis; isopentenyl diphosphate biosynthesis via DXP pathway; isopentenyl diphosphate from 1-deoxy-D-xylulose 5-phosphate: step 4/6. In terms of biological role, bifunctional enzyme that catalyzes the formation of 4-diphosphocytidyl-2-C-methyl-D-erythritol from CTP and 2-C-methyl-D-erythritol 4-phosphate (MEP) (IspD), and catalyzes the conversion of 4-diphosphocytidyl-2-C-methyl-D-erythritol 2-phosphate (CDP-ME2P) to 2-C-methyl-D-erythritol 2,4-cyclodiphosphate (ME-CPP) with a corresponding release of cytidine 5-monophosphate (CMP) (IspF). This chain is Bifunctional enzyme IspD/IspF, found in Maricaulis maris (strain MCS10) (Caulobacter maris).